We begin with the raw amino-acid sequence, 501 residues long: Growth/differentiation factor 5 (501 aa).

Positions 1 to 27 are cleaved as a signal peptide; the sequence is MRLPKLLTFLLWYLAWLDLEFICTVLG. The propeptide occupies 28-381; sequence APDLGQRPQG…YLFSQRRKRR (354 aa). Residues 29-169 form a disordered region; that stretch reads PDLGQRPQGT…EPFRPPPITP (141 aa). The span at 99–111 shows a compositional bias: pro residues; it reads PRPGGPEPKPGHP. Positions 148–162 are enriched in basic and acidic residues; the sequence is KAREPGPPREPKEPF. Asn-189 carries an N-linked (GlcNAc...) asparagine glycan. The segment at 246 to 265 is disordered; that stretch reads PSDTAKPAAPGGGRAAQLKL. 3 disulfide bridges follow: Cys-400–Cys-466, Cys-429–Cys-498, and Cys-433–Cys-500.

Belongs to the TGF-beta family. In terms of assembly, homodimer; disulfide-linked. Interacts with serine proteases, HTRA1 and HTRA3. Following LPS binding, may form a complex with CXCR4, HSP90AA1 and HSPA8. Interacts with high affinity with NOG; inhibits chondrogenesis. Interacts with high affinity with BMPR1B and lower affinity with BMPR1A; positively regulates chondrocyte differentiation and induces SMAD dependent signaling. Interacts with FBN1 (via N-terminal domain) and FBN2. Interacts with TGFBR3. Predominantly expressed in long bones during embryonic development. Expressed in monocytes (at protein level).

It localises to the secreted. The protein localises to the cell membrane. Its function is as follows. Growth factor involved in bone and cartilage formation. During cartilage development regulates differentiation of chondrogenic tissue through two pathways. Firstly, positively regulates differentiation of chondrogenic tissue through its binding of high affinity with BMPR1B and of less affinity with BMPR1A, leading to induction of SMAD1-SMAD5-SMAD8 complex phosphorylation and then SMAD protein signaling transduction. Secondly, negatively regulates chondrogenic differentiation through its interaction with NOG. Required to prevent excessive muscle loss upon denervation. This function requires SMAD4 and is mediated by phosphorylated SMAD1/5/8. Binds bacterial lipopolysaccharide (LPS) and mediates LPS-induced inflammatory response, including TNF secretion by monocytes. In Homo sapiens (Human), this protein is Growth/differentiation factor 5 (GDF5).